The chain runs to 690 residues: Highly divergent homeobox (690 aa).

The homeobox 1 DNA-binding region spans 3 to 63; sequence LRSVFTVEQQ…NKRRKMSSKN (61 aa). 2 disordered regions span residues 55–76 and 112–132; these read KRRK…TSLS and SPAS…QITE. The span at 64–76 shows a compositional bias: low complexity; sequence SESGTATTGTSLS. Over residues 113 to 123 the composition is skewed to polar residues; sequence PASSSSRQGTN. Residues lysine 135, lysine 140, lysine 144, lysine 163, lysine 172, lysine 194, lysine 212, lysine 221, and lysine 232 each participate in a glycyl lysine isopeptide (Lys-Gly) (interchain with G-Cter in SUMO2) cross-link. The segment at residues 435 to 498 is a DNA-binding region (homeobox 2); that stretch reads ALQDRTQFSD…NRRRKYRLMG (64 aa). The tract at residues 501 to 539 is disordered; the sequence is VPPPRGGPADFSEQPESGSLSALTPGEEAGPEVGEDNDR. Lysine 613 participates in a covalent cross-link: Glycyl lysine isopeptide (Lys-Gly) (interchain with G-Cter in SUMO2). The interval 664-690 is disordered; it reads FNHASLEPDDTSFSVSSLSEKNVSESL. A compositionally biased stretch (polar residues) spans 674–690; sequence TSFSVSSLSEKNVSESL.

The protein resides in the nucleus. The protein is Highly divergent homeobox (HDX) of Homo sapiens (Human).